A 356-amino-acid chain; its full sequence is Nucleotide-binding protein GDI1189/Gdia_1902 (356 aa).

Gly20–Ser27 contributes to the ATP binding site. Asp65–Thr68 is a binding site for GTP. A disordered region spans residues Glu285–Ala313.

Belongs to the RapZ-like family.

Its function is as follows. Displays ATPase and GTPase activities. The protein is Nucleotide-binding protein GDI1189/Gdia_1902 of Gluconacetobacter diazotrophicus (strain ATCC 49037 / DSM 5601 / CCUG 37298 / CIP 103539 / LMG 7603 / PAl5).